A 249-amino-acid polypeptide reads, in one-letter code: Deoxyribose-phosphate aldolase (249 aa).

The active-site Proton donor/acceptor is the aspartate 94. Residue lysine 158 is the Schiff-base intermediate with acetaldehyde of the active site. The active-site Proton donor/acceptor is the lysine 200.

This sequence belongs to the DeoC/FbaB aldolase family. DeoC type 1 subfamily.

It localises to the cytoplasm. It carries out the reaction 2-deoxy-D-ribose 5-phosphate = D-glyceraldehyde 3-phosphate + acetaldehyde. It functions in the pathway carbohydrate degradation; 2-deoxy-D-ribose 1-phosphate degradation; D-glyceraldehyde 3-phosphate and acetaldehyde from 2-deoxy-alpha-D-ribose 1-phosphate: step 2/2. Catalyzes a reversible aldol reaction between acetaldehyde and D-glyceraldehyde 3-phosphate to generate 2-deoxy-D-ribose 5-phosphate. This is Deoxyribose-phosphate aldolase from Thermoplasma volcanium (strain ATCC 51530 / DSM 4299 / JCM 9571 / NBRC 15438 / GSS1).